A 279-amino-acid polypeptide reads, in one-letter code: Movement protein (279 aa).

Positions 246 to 279 (SESEELNVESPPAAIGSSSASRSEAFRPQVVNGL) are disordered. Positions 254-268 (ESPPAAIGSSSASRS) are enriched in low complexity.

Belongs to the cucumovirus movement protein family.

The protein resides in the host cell junction. It is found in the host plasmodesma. Transports viral genome to neighboring plant cells directly through plasmosdesmata, without any budding. The movement protein allows efficient cell to cell propagation, by bypassing the host cell wall barrier. Acts by forming a tubular structure at the host plasmodesmata, enlarging it enough to allow free passage of virion capsids. This chain is Movement protein, found in Cucumber mosaic virus (strain N) (CMV).